A 583-amino-acid polypeptide reads, in one-letter code: Vivapain-1 (583 aa).

Residues 1–34 (MAQDIKIMNLTKSSLEALNRNQMLSKKSSRKILK) are Cytoplasmic-facing. Residues 1-338 (MAQDIKIMNL…SSSGANLLAD (338 aa)) constitute a propeptide, activation peptide. A helical; Signal-anchor for type II membrane protein membrane pass occupies residues 35–55 (ICMYAILTFAMCGVVLICLTA). Topologically, residues 56 to 583 (MSNSDGSLTQ…IGVEVFYPIL (528 aa)) are lumenal. A compositionally biased stretch (polar residues) spans 62 to 82 (SLTQSGSHNQSGSLKGLSSTP). Disordered stretches follow at residues 62-83 (SLTQ…STPG) and 104-125 (PHGN…ALPN). N-linked (GlcNAc...) asparagine glycosylation occurs at Asn70. Positions 106–119 (GNRDPTGDDVEKPA) are enriched in basic and acidic residues. 2 N-linked (GlcNAc...) asparagine glycosylation sites follow: Asn195 and Asn272. 3 cysteine pairs are disulfide-bonded: Cys360–Cys402, Cys395–Cys435, and Cys420–Cys440. The active site involves Cys363. N-linked (GlcNAc...) asparagine glycosylation occurs at Asn381. N-linked (GlcNAc...) asparagine glycosylation is found at Asn486 and Asn494. A disulfide bridge links Cys489 with Cys572. Residues His495 and Asn547 contribute to the active site.

It belongs to the peptidase C1 family.

It localises to the membrane. Its function is as follows. Cysteine protease. The polypeptide is Vivapain-1 (Plasmodium vivax (strain Salvador I)).